The following is a 257-amino-acid chain: Uracil phosphoribosyltransferase homolog (257 aa).

Residues Arg81, Arg90, and 124-127 each bind GTP; that span reads EKGN. Arg134 is a 5-phospho-alpha-D-ribose 1-diphosphate binding site. GTP contacts are provided by Arg151 and Arg180. 186-194 lines the 5-phospho-alpha-D-ribose 1-diphosphate pocket; sequence YPILSTGNT. 247–249 lines the uracil pocket; the sequence is THF.

The protein belongs to the UPRTase family.

It is found in the cytoplasm. The protein localises to the nucleus. The sequence is that of Uracil phosphoribosyltransferase homolog (uprt) from Danio rerio (Zebrafish).